The chain runs to 962 residues: Translation initiation factor IF-2 (962 aa).

A compositionally biased stretch (basic and acidic residues) spans 52–77; that stretch reads RSHGQADDSSRKKITLTKRETSEIRQ. Disordered stretches follow at residues 52–87 and 121–378; these read RSHG…TRTV and AVEE…EPVV. Positions 78 to 87 are enriched in polar residues; the sequence is SDGTGKTRTV. Composition is skewed to basic and acidic residues over residues 123 to 183, 197 to 250, and 267 to 278; these read EEAR…KAEE, DSSR…EAEA, and PSERKAEEKKAE. Residues 342–355 show a composition bias toward gly residues; that stretch reads TSGGVGGWRGGPRG. Residues 462 to 631 enclose the tr-type G domain; that stretch reads PRPPVVTVMG…LLQAEVLELT (170 aa). Positions 471 to 478 are G1; it reads GHVDHGKT. Residue 471–478 coordinates GTP; it reads GHVDHGKT. Residues 496 to 500 are G2; it reads GITQH. Positions 517–520 are G3; sequence DTPG. Residues 517 to 521 and 571 to 574 each bind GTP; these read DTPGH and NKID. The interval 571–574 is G4; it reads NKID. Positions 607-609 are G5; the sequence is SAK.

It belongs to the TRAFAC class translation factor GTPase superfamily. Classic translation factor GTPase family. IF-2 subfamily.

The protein resides in the cytoplasm. Functionally, one of the essential components for the initiation of protein synthesis. Protects formylmethionyl-tRNA from spontaneous hydrolysis and promotes its binding to the 30S ribosomal subunits. Also involved in the hydrolysis of GTP during the formation of the 70S ribosomal complex. The chain is Translation initiation factor IF-2 from Cupriavidus necator (strain ATCC 17699 / DSM 428 / KCTC 22496 / NCIMB 10442 / H16 / Stanier 337) (Ralstonia eutropha).